Consider the following 164-residue polypeptide: Peptidyl-prolyl cis-trans isomerase A (164 aa).

An N-acetylmethionine modification is found at methionine 1. Position 2 is an N-acetylvaline; in Peptidyl-prolyl cis-trans isomerase A, N-terminally processed (valine 2). Positions 7 to 163 (FFDIAVDGEP…KKITIANCGQ (157 aa)) constitute a PPIase cyclophilin-type domain. Residue lysine 28 is modified to N6-acetyllysine; alternate. Residue lysine 28 forms a Glycyl lysine isopeptide (Lys-Gly) (interchain with G-Cter in SUMO2); alternate linkage. A Glycyl lysine isopeptide (Lys-Gly) (interchain with G-Cter in ubiquitin); alternate cross-link involves residue lysine 28. N6-acetyllysine occurs at positions 44 and 76. Serine 77 is modified (phosphoserine). The residue at position 82 (lysine 82) is an N6-acetyllysine; alternate. Residue lysine 82 forms a Glycyl lysine isopeptide (Lys-Gly) (interchain with G-Cter in SUMO2); alternate linkage. Residue threonine 93 is modified to Phosphothreonine. Residue asparagine 108 is glycosylated (N-linked (GlcNAc...) asparagine). An N6-acetyllysine mark is found at lysine 125 and lysine 133.

It belongs to the cyclophilin-type PPIase family. PPIase A subfamily. In terms of assembly, interacts with protein phosphatase PPP3CA/calcineurin A. Interacts with isoform 2 of BSG/CD147. Interacts with FOXO1; the interaction promotes FOXO1 dephosphorylation, nuclear accumulation and transcriptional activity. Interacts with integrin ITGA2B:ITGB3; the interaction is ROS and peptidyl-prolyl cis-trans isomerase (PPIase) activity-dependent and is increased in the presence of thrombin. Interacts with MAP3K5. Interacts with TARDBP; the interaction is dependent on the RNA-binding activity of TARDBP and the PPIase activity of PPIA/CYPA and the acetylation of PPIA/CYPA at Lys-125 favors the interaction. Interacts with HNRNPA1, HNRNPA2B1, HNRNPC, RBMX, HNRNPK and HNRNPM. Acetylation at Lys-125 markedly inhibits catalysis of cis to trans isomerization. PPIA acetylation also antagonizes the immunosuppressive effects of cyclosporine by inhibiting the sequential steps of cyclosporine binding and calcineurin inhibition. Acetylation at Lys-125 favors the interaction with TARDBP.

The protein localises to the cytoplasm. It localises to the secreted. Its subcellular location is the nucleus. It carries out the reaction [protein]-peptidylproline (omega=180) = [protein]-peptidylproline (omega=0). With respect to regulation, binds cyclosporin A (CsA). CsA mediates some of its effects via an inhibitory action on PPIase. Catalyzes the cis-trans isomerization of proline imidic peptide bonds in oligopeptides. Exerts a strong chemotactic effect on leukocytes partly through activation of one of its membrane receptors BSG/CD147, initiating a signaling cascade that culminates in MAPK/ERK activation. Activates endothelial cells (ECs) in a proinflammatory manner by stimulating activation of NF-kappa-B and ERK, JNK and p38 MAP-kinases and by inducing expression of adhesion molecules including SELE and VCAM1. Induces apoptosis in ECs by promoting the FOXO1-dependent expression of CCL2 and BCL2L11 which are involved in EC chemotaxis and apoptosis. In response to oxidative stress, initiates proapoptotic and antiapoptotic signaling in ECs via activation of NF-kappa-B and AKT1 and up-regulation of antiapoptotic protein BCL2. Negatively regulates MAP3K5/ASK1 kinase activity, autophosphorylation and oxidative stress-induced apoptosis mediated by MAP3K5/ASK1. Necessary for the assembly of TARDBP in heterogeneous nuclear ribonucleoprotein (hnRNP) complexes and regulates TARDBP binding to RNA UG repeats and TARDBP-dependent expression of HDAC6, ATG7 and VCP which are involved in clearance of protein aggregates. Plays an important role in platelet activation and aggregation. Regulates calcium mobilization and integrin ITGA2B:ITGB3 bidirectional signaling via increased ROS production as well as by facilitating the interaction between integrin and the cell cytoskeleton. Binds heparan sulfate glycosaminoglycans. The sequence is that of Peptidyl-prolyl cis-trans isomerase A (PPIA) from Oryctolagus cuniculus (Rabbit).